Consider the following 670-residue polypeptide: UvrABC system protein B (670 aa).

Residues 28-414 enclose the Helicase ATP-binding domain; that stretch reads NNFKQGLQEQ…KKIPIVEQII (387 aa). Residue 41-48 participates in ATP binding; it reads GATGTGKT. Positions 94–117 match the Beta-hairpin motif; that stretch reads YYDYYQPEAYVASSDTYIEKDSKI. In terms of domain architecture, Helicase C-terminal spans 432–594; it reads QMDDLYFEIK…VTPTALNKTI (163 aa). The UVR domain occupies 631-666; sequence NKEIKRLQKMMKEAAKTLDFEKAATLRDLILELEKK.

Belongs to the UvrB family. Forms a heterotetramer with UvrA during the search for lesions. Interacts with UvrC in an incision complex.

It localises to the cytoplasm. Its function is as follows. The UvrABC repair system catalyzes the recognition and processing of DNA lesions. A damage recognition complex composed of 2 UvrA and 2 UvrB subunits scans DNA for abnormalities. Upon binding of the UvrA(2)B(2) complex to a putative damaged site, the DNA wraps around one UvrB monomer. DNA wrap is dependent on ATP binding by UvrB and probably causes local melting of the DNA helix, facilitating insertion of UvrB beta-hairpin between the DNA strands. Then UvrB probes one DNA strand for the presence of a lesion. If a lesion is found the UvrA subunits dissociate and the UvrB-DNA preincision complex is formed. This complex is subsequently bound by UvrC and the second UvrB is released. If no lesion is found, the DNA wraps around the other UvrB subunit that will check the other stand for damage. In Onion yellows phytoplasma (strain OY-M), this protein is UvrABC system protein B.